We begin with the raw amino-acid sequence, 393 residues long: RNA pseudouridine synthase 7 (393 aa).

Positions 49–118 (KTIVDLFTDE…GDITILQNEA (70 aa)) constitute an S4 RNA-binding domain. D162 is a catalytic residue.

This sequence belongs to the pseudouridine synthase RluA family.

The catalysed reaction is a uridine in RNA = a pseudouridine in RNA. The sequence is that of RNA pseudouridine synthase 7 from Oryza sativa subsp. japonica (Rice).